A 443-amino-acid chain; its full sequence is Threonine/serine transporter TdcC (443 aa).

11 consecutive transmembrane segments (helical) span residues T22–I42, A44–F64, G97–V117, F140–M160, V163–I183, I207–I227, M261–A281, F311–F331, L366–L386, I389–I409, and D423–F443.

This sequence belongs to the amino acid/polyamine transporter 2 family. SdaC/TdcC subfamily.

Its subcellular location is the cell inner membrane. It carries out the reaction L-threonine(in) + H(+)(in) = L-threonine(out) + H(+)(out). The enzyme catalyses L-serine(in) + H(+)(in) = L-serine(out) + H(+)(out). In terms of biological role, involved in the import of threonine and serine into the cell, with the concomitant import of a proton (symport system). This Shigella flexneri serotype 5b (strain 8401) protein is Threonine/serine transporter TdcC.